Reading from the N-terminus, the 339-residue chain is Fructose-1,6-bisphosphatase isozyme 2 (339 aa).

The tract at residues 3–10 (DRSPFETD) is important for interaction with ALDOA. AMP-binding positions include valine 18 and 28 to 32 (TGELT). Residues aspartate 69 and glutamate 98 each coordinate Mg(2+). 113 to 114 (KY) serves as a coordination point for AMP. Mg(2+) is bound by residues aspartate 119, leucine 121, and aspartate 122. Residue aspartate 122 coordinates substrate. Arginine 141 contributes to the AMP binding site. A Nuclear localization signal motif is present at residues 204–208 (KKKGK). Position 213-216 (213-216 (NEGY)) interacts with substrate. 2 positions are modified to phosphotyrosine: tyrosine 216 and tyrosine 219. Substrate contacts are provided by residues 245-249 (YVGSM), tyrosine 265, and lysine 275. Glutamate 281 is a Mg(2+) binding site.

The protein belongs to the FBPase class 1 family. As to quaternary structure, homotetramer. Interacts with ALDOA; the interaction blocks inhibition by physiological concentrations of AMP and reduces inhibition by Ca(2+). Interacts with alpha-actinin and F-actin. Requires Mg(2+) as cofactor.

It is found in the cell junction. Its subcellular location is the cytoplasm. The protein localises to the nucleus. The protein resides in the myofibril. It localises to the sarcomere. It is found in the z line. The enzyme catalyses beta-D-fructose 1,6-bisphosphate + H2O = beta-D-fructose 6-phosphate + phosphate. The protein operates within carbohydrate biosynthesis; gluconeogenesis. Its activity is regulated as follows. Subject to complex allosteric regulation. The enzyme can assume an active R-state, or an inactive T-state. Intermediate conformations may exist. AMP acts as an allosteric inhibitor. Fructose 2,6-bisphosphate acts as a competitive inhibitor. Strongly inhibited by Ca(2+). Catalyzes the hydrolysis of fructose 1,6-bisphosphate to fructose 6-phosphate in the presence of divalent cations and probably participates in glycogen synthesis from carbohydrate precursors, such as lactate. The polypeptide is Fructose-1,6-bisphosphatase isozyme 2 (FBP2) (Oryctolagus cuniculus (Rabbit)).